Reading from the N-terminus, the 136-residue chain is Small nuclear ribonucleoprotein Sm D3 (136 aa).

The region spanning 6–78 (VPIKILHEAE…IRFMILPDML (73 aa)) is the Sm domain. Residues 98 to 136 (GLGGLDQRGRGRGTAFRRPMGRGGPRGMSRPGGAPTFRG) form a disordered region.

It belongs to the snRNP core protein family.

Its subcellular location is the nucleus. It is found in the cytoplasm. The protein localises to the cytosol. Its function is as follows. Plays a role in pre-mRNA splicing as a core component of the spliceosomal U1, U2, U4 and U5 small nuclear ribonucleoproteins (snRNPs), the building blocks of the spliceosome. This Caenorhabditis elegans protein is Small nuclear ribonucleoprotein Sm D3 (snr-1).